Here is a 292-residue protein sequence, read N- to C-terminus: Ribosomal protein L11 methyltransferase (292 aa).

Positions 144, 165, 187, and 229 each coordinate S-adenosyl-L-methionine.

The protein belongs to the methyltransferase superfamily. PrmA family.

It is found in the cytoplasm. The enzyme catalyses L-lysyl-[protein] + 3 S-adenosyl-L-methionine = N(6),N(6),N(6)-trimethyl-L-lysyl-[protein] + 3 S-adenosyl-L-homocysteine + 3 H(+). Its function is as follows. Methylates ribosomal protein L11. The polypeptide is Ribosomal protein L11 methyltransferase (Saccharophagus degradans (strain 2-40 / ATCC 43961 / DSM 17024)).